A 406-amino-acid chain; its full sequence is Succinylornithine transaminase (406 aa).

Lys-252 bears the N6-(pyridoxal phosphate)lysine mark.

It belongs to the class-III pyridoxal-phosphate-dependent aminotransferase family. AstC subfamily. Pyridoxal 5'-phosphate serves as cofactor.

The catalysed reaction is N(2)-succinyl-L-ornithine + 2-oxoglutarate = N-succinyl-L-glutamate 5-semialdehyde + L-glutamate. The protein operates within amino-acid degradation; L-arginine degradation via AST pathway; L-glutamate and succinate from L-arginine: step 3/5. Catalyzes the transamination of N(2)-succinylornithine and alpha-ketoglutarate into N(2)-succinylglutamate semialdehyde and glutamate. Can also act as an acetylornithine aminotransferase. The sequence is that of Succinylornithine transaminase from Escherichia coli (strain SMS-3-5 / SECEC).